A 340-amino-acid polypeptide reads, in one-letter code: Fructose-bisphosphate aldolase (340 aa).

Position 53 (Ser53) interacts with D-glyceraldehyde 3-phosphate. Asp95 acts as the Proton donor in catalysis. Zn(2+) contacts are provided by His96, Asp131, Glu161, and His212. Position 213 (Gly213) interacts with dihydroxyacetone phosphate. His249 is a binding site for Zn(2+). Dihydroxyacetone phosphate contacts are provided by residues 250-252 (GGS) and 271-274 (NLDT).

It belongs to the class II fructose-bisphosphate aldolase family. Requires Zn(2+) as cofactor.

It catalyses the reaction beta-D-fructose 1,6-bisphosphate = D-glyceraldehyde 3-phosphate + dihydroxyacetone phosphate. The protein operates within carbohydrate degradation; glycolysis; D-glyceraldehyde 3-phosphate and glycerone phosphate from D-glucose: step 4/4. In terms of biological role, catalyzes the aldol condensation of dihydroxyacetone phosphate (DHAP or glycerone-phosphate) with glyceraldehyde 3-phosphate (G3P) to form fructose 1,6-bisphosphate (FBP) in gluconeogenesis and the reverse reaction in glycolysis. This is Fructose-bisphosphate aldolase (fba) from Streptomyces galbus.